The following is a 192-amino-acid chain: Thiamine transporter ThiT (192 aa).

6 consecutive transmembrane segments (helical) span residues 10–30 (LIEIAIMTAAAVILDIVSGMF), 31–51 (LSMPQGGSVSIMMIPIFLISF), 57–77 (AGLTTGLLTGLVQIAIGNLFA), 81–101 (VQLLLDYIVAFAAIGISGCFA), 123–143 (AVFIGSLLRYAAHVISGAVFF), and 164–184 (YMVPSFIICAIVLCLLFMTAP).

Belongs to the vitamin uptake transporter (VUT/ECF) (TC 2.A.88) family. Thiamine transporter subfamily. Forms a stable energy-coupling factor (ECF) transporter complex composed of a membrane-embedded substrate-binding protein (S component), two ATP-binding proteins (A components) and a transmembrane protein (T component).

The protein resides in the cell membrane. In terms of biological role, probably a thiamine-binding protein that interacts with the energy-coupling factor (ECF) ABC-transporter complex. Unlike classic ABC transporters this ECF transporter provides the energy necessary to transport a number of different substrates. The substrates themselves are bound by transmembrane, not extracytoplasmic soluble proteins. The chain is Thiamine transporter ThiT (thiT) from Bacillus subtilis (strain 168).